The primary structure comprises 286 residues: 4-hydroxybenzoate octaprenyltransferase (286 aa).

Helical transmembrane passes span I20–M40, L43–I63, L96–V116, F142–V162, W167–V187, Q210–A230, V235–F255, and F266–F286.

Belongs to the UbiA prenyltransferase family. Mg(2+) serves as cofactor.

It localises to the cell inner membrane. The enzyme catalyses all-trans-octaprenyl diphosphate + 4-hydroxybenzoate = 4-hydroxy-3-(all-trans-octaprenyl)benzoate + diphosphate. It functions in the pathway cofactor biosynthesis; ubiquinone biosynthesis. Catalyzes the prenylation of para-hydroxybenzoate (PHB) with an all-trans polyprenyl group. Mediates the second step in the final reaction sequence of ubiquinone-8 (UQ-8) biosynthesis, which is the condensation of the polyisoprenoid side chain with PHB, generating the first membrane-bound Q intermediate 3-octaprenyl-4-hydroxybenzoate. In Shewanella oneidensis (strain ATCC 700550 / JCM 31522 / CIP 106686 / LMG 19005 / NCIMB 14063 / MR-1), this protein is 4-hydroxybenzoate octaprenyltransferase.